The primary structure comprises 442 residues: Exodeoxyribonuclease 7 large subunit (442 aa).

A disordered region spans residues 1-38 (MSDSTQFSLFDSGDDEPAKVTAPKRKVARKKRSSSSSD). Residues 22-33 (APKRKVARKKRS) show a composition bias toward basic residues.

It belongs to the XseA family. As to quaternary structure, heterooligomer composed of large and small subunits.

It is found in the cytoplasm. The catalysed reaction is Exonucleolytic cleavage in either 5'- to 3'- or 3'- to 5'-direction to yield nucleoside 5'-phosphates.. Bidirectionally degrades single-stranded DNA into large acid-insoluble oligonucleotides, which are then degraded further into small acid-soluble oligonucleotides. In Rhodopirellula baltica (strain DSM 10527 / NCIMB 13988 / SH1), this protein is Exodeoxyribonuclease 7 large subunit.